The sequence spans 256 residues: Trans-aconitate 2-methyltransferase (256 aa).

The protein belongs to the methyltransferase superfamily. Tam family.

It is found in the cytoplasm. It catalyses the reaction trans-aconitate + S-adenosyl-L-methionine = (E)-3-(methoxycarbonyl)pent-2-enedioate + S-adenosyl-L-homocysteine. In terms of biological role, catalyzes the S-adenosylmethionine monomethyl esterification of trans-aconitate. In Rhodopseudomonas palustris (strain BisB5), this protein is Trans-aconitate 2-methyltransferase.